Reading from the N-terminus, the 214-residue chain is Cdc42 effector protein 2 (214 aa).

S2 carries the N-acetylserine modification. The CRIB domain maps to 30-44 (ISPPLGDFRHTIHIG). 5 positions are modified to phosphoserine: S31, S101, S137, S141, and S145. The disordered stretch occupies residues 118–151 (ALTLPTTQAPPKPPRLHLESPQPSPKSSPQEAGN).

It belongs to the BORG/CEP family. In terms of assembly, interacts with CDC42 and RHOQ, in a GTP-dependent manner, and with SEPT7.

It is found in the endomembrane system. Its subcellular location is the cytoplasm. The protein localises to the cytoskeleton. Its function is as follows. Probably involved in the organization of the actin cytoskeleton. May act downstream of CDC42 to induce actin filament assembly leading to cell shape changes. Induces pseudopodia formation in fibroblasts in a CDC42-dependent manner. This chain is Cdc42 effector protein 2 (Cdc42ep2), found in Rattus norvegicus (Rat).